The sequence spans 127 residues: Fluoride-specific ion channel FluC (127 aa).

A run of 4 helical transmembrane segments spans residues 7–27 (LILI…MGLI), 37–57 (FGTL…MAMI), 69–89 (LFMI…SAEV), and 102–122 (LGIM…GVLI). Residues G77 and T80 each contribute to the Na(+) site.

The protein belongs to the fluoride channel Fluc/FEX (TC 1.A.43) family.

The protein localises to the cell inner membrane. It catalyses the reaction fluoride(in) = fluoride(out). Na(+) is not transported, but it plays an essential structural role and its presence is essential for fluoride channel function. Its function is as follows. Fluoride-specific ion channel. Important for reducing fluoride concentration in the cell, thus reducing its toxicity. The chain is Fluoride-specific ion channel FluC from Mannheimia succiniciproducens (strain KCTC 0769BP / MBEL55E).